A 312-amino-acid chain; its full sequence is tRNA uridine(34) hydroxylase (312 aa).

The region spanning 123 to 216 is the Rhodanese domain; sequence DRDDVVVLDV…YGIEQGGEDF (94 aa). The Cysteine persulfide intermediate role is filled by cysteine 176.

It belongs to the TrhO family.

It catalyses the reaction uridine(34) in tRNA + AH2 + O2 = 5-hydroxyuridine(34) in tRNA + A + H2O. In terms of biological role, catalyzes oxygen-dependent 5-hydroxyuridine (ho5U) modification at position 34 in tRNAs. This is tRNA uridine(34) hydroxylase from Cytophaga hutchinsonii (strain ATCC 33406 / DSM 1761 / CIP 103989 / NBRC 15051 / NCIMB 9469 / D465).